The following is a 477-amino-acid chain: Nuclear receptor subfamily 6 group A member 1-A (477 aa).

A DNA-binding region (nuclear receptor) is located at residues 40 to 115 (QRSCLICGDR…MGMNRKAIRE (76 aa)). NR C4-type zinc fingers lie at residues 43-63 (CLIC…CEGC) and 79-98 (CSRD…CQYC). Positions 147 to 187 (DEANMPEHTWGNNGDSDHSSPGNGVSDGNQPSPVSTLSSNR) are disordered. Polar residues predominate over residues 156–187 (WGNNGDSDHSSPGNGVSDGNQPSPVSTLSSNR). Positions 230 to 461 (QSHTLIGQLV…HSCKSSLSSY (232 aa)) constitute an NR LBD domain.

It belongs to the nuclear hormone receptor family. NR6 subfamily. Homodimer. Expressed in germ cells, being predominant in previtellogenic oocytes in the ovary and in spermatocytes in the testis.

The protein resides in the nucleus. In terms of biological role, probable orphan nuclear receptor. Binds to a response element containing repeats of the motif 5'-AGGTCA-3'. This Danio rerio (Zebrafish) protein is Nuclear receptor subfamily 6 group A member 1-A.